A 240-amino-acid chain; its full sequence is Ribonuclease PH (240 aa).

Residues arginine 87 and 125 to 127 (GTR) contribute to the phosphate site.

The protein belongs to the RNase PH family. As to quaternary structure, homohexameric ring arranged as a trimer of dimers.

The enzyme catalyses tRNA(n+1) + phosphate = tRNA(n) + a ribonucleoside 5'-diphosphate. Functionally, phosphorolytic 3'-5' exoribonuclease that plays an important role in tRNA 3'-end maturation. Removes nucleotide residues following the 3'-CCA terminus of tRNAs; can also add nucleotides to the ends of RNA molecules by using nucleoside diphosphates as substrates, but this may not be physiologically important. Probably plays a role in initiation of 16S rRNA degradation (leading to ribosome degradation) during starvation. The sequence is that of Ribonuclease PH from Pseudomonas putida (strain GB-1).